We begin with the raw amino-acid sequence, 419 residues long: Innexin inx5 (419 aa).

Over 1–21 the chain is Cytoplasmic; sequence MFSAVKPLSKYLQFKSIRIYD. A helical membrane pass occupies residues 22–42; it reads SVFTIHSRCTVVILLTCSLLL. Residues 43-162 are Extracellular-facing; it reads SARQYFGDPI…QTERQYLRYY (120 aa). Residues 163-183 traverse the membrane as a helical segment; the sequence is QWVIILLLFQSFVFYFPSCLW. Residues 184-238 are Cytoplasmic-facing; that stretch reads KVWEGRRLKQLCSEVGDALLSEETYNTRLRMLVKYFTTDYEDMHFCYMAKYVFCE. The helical transmembrane segment at 239–259 threads the bilayer; sequence VLNFLISVVNIIVLEVFLNGF. Topologically, residues 260–320 are extracellular; sequence WSKYLRALAT…ILPLNILNEK (61 aa). A helical transmembrane segment spans residues 321-341; sequence IFVFLWAWFLLMALMSGLNLL. The Cytoplasmic segment spans residues 342–419; sequence CRLAMICSRY…ASGSTLESPV (78 aa).

This sequence belongs to the pannexin family. Expressed in the cortex of the pupal CNS and at low levels in the wing imaginal disk.

Its subcellular location is the cell membrane. The protein localises to the cell junction. It localises to the gap junction. Its function is as follows. Structural component of the gap junctions. The polypeptide is Innexin inx5 (Inx5) (Drosophila melanogaster (Fruit fly)).